The chain runs to 183 residues: Ras-related protein Rap-2a (183 aa).

Position 10-17 (Gly10–Ser17) interacts with GTP. The Effector region motif lies at Tyr32–Tyr40. GTP is bound by residues Asp57–Thr61 and Asn116–Asp119. 2 S-palmitoyl cysteine lipidation sites follow: Cys176 and Cys177. At Cys180 the chain carries Cysteine methyl ester. Residue Cys180 is the site of S-farnesyl cysteine attachment. Positions Val181–Leu183 are cleaved as a propeptide — removed in mature form.

This sequence belongs to the small GTPase superfamily. Ras family. As to quaternary structure, interacts (GTP-bound form) with RUNDC3A. Interacts with PLCE1. Interacts with ARHGAP29, SGSM1, SGSM2 and SGSM3. Interacts (GTP-bound form preferentially) with TNIK (via the CNH domain); the interaction is direct and recruits RAP2A to the E3 ubiquitin ligase NEDD4. Interacts with MINK1. Interacts (GTP-bound form preferentially) with MAP4K4. Interacts with cytoskeletal actin. Interacts with RGS14; the interaction is GTP-dependent. Ubiquitinated; undergoes 'Lys-63' monoubiquitination and diubiquitination by NEDD4. Multiple lysine residues are probably modified. Ubiquitination requires TNIK, prevents interaction with effectors and inactivates RAP2A. Ubiquitination by the ECS(RAB40B) complex leads to RAP2A localization to lamellipodia plasma membrane, activation, and regulation of sorting at early endosomes for recycling to the lamellipodia plasma membrane. In terms of processing, palmitoylated. Palmitoylation is required for association with recycling endosome membranes and activation of TNIK.

The protein resides in the midbody. Its subcellular location is the cell projection. The protein localises to the lamellipodium membrane. It is found in the golgi apparatus. It localises to the recycling endosome membrane. The protein resides in the lysosome. The enzyme catalyses GTP + H2O = GDP + phosphate + H(+). With respect to regulation, activated by the guanine nucleotide-exchange factors RAPGEF3 and RAPGEF4 in a cAMP-dependent manner. Nucleotide exchange is also specifically stimulated by RAPGEF5, RASGEF1A and RASGEF1B. In terms of biological role, small GTP-binding protein which cycles between a GDP-bound inactive and a GTP-bound active form. In its active form interacts with and regulates several effectors including MAP4K4, MINK1 and TNIK. Part of a signaling complex composed of NEDD4, RAP2A and TNIK which regulates neuronal dendrite extension and arborization during development. More generally, it is part of several signaling cascades and may regulate cytoskeletal rearrangements, cell migration, cell adhesion and cell spreading. This Sus scrofa (Pig) protein is Ras-related protein Rap-2a (RAP2A).